A 413-amino-acid polypeptide reads, in one-letter code: Phosphopentomutase (413 aa).

Mn(2+) contacts are provided by D11, D306, H311, D347, H348, and H359.

The protein belongs to the phosphopentomutase family. Mn(2+) serves as cofactor.

The protein resides in the cytoplasm. The catalysed reaction is 2-deoxy-alpha-D-ribose 1-phosphate = 2-deoxy-D-ribose 5-phosphate. The enzyme catalyses alpha-D-ribose 1-phosphate = D-ribose 5-phosphate. The protein operates within carbohydrate degradation; 2-deoxy-D-ribose 1-phosphate degradation; D-glyceraldehyde 3-phosphate and acetaldehyde from 2-deoxy-alpha-D-ribose 1-phosphate: step 1/2. In terms of biological role, isomerase that catalyzes the conversion of deoxy-ribose 1-phosphate (dRib-1-P) and ribose 1-phosphate (Rib-1-P) to deoxy-ribose 5-phosphate (dRib-5-P) and ribose 5-phosphate (Rib-5-P), respectively. The chain is Phosphopentomutase from Helicobacter acinonychis (strain Sheeba).